A 261-amino-acid chain; its full sequence is Global transcriptional regulator CodY (261 aa).

Residues 1–159 are GAF domain; that stretch reads MPNLLEKTRK…ASTVVGIQLL (159 aa). Positions 207–226 form a DNA-binding region, H-T-H motif; it reads ASVIADRIGITRSVIVNALR.

The protein belongs to the CodY family.

The protein resides in the cytoplasm. In terms of biological role, DNA-binding global transcriptional regulator which is involved in the adaptive response to starvation and acts by directly or indirectly controlling the expression of numerous genes in response to nutrient availability. During rapid exponential growth, CodY is highly active and represses genes whose products allow adaptation to nutrient depletion. The chain is Global transcriptional regulator CodY from Streptococcus agalactiae serotype Ia (strain ATCC 27591 / A909 / CDC SS700).